Reading from the N-terminus, the 415-residue chain is Proline-serine-threonine phosphatase-interacting protein 1 (415 aa).

One can recognise an F-BAR domain in the interval Leu-5 to Asp-264. Coiled-coil stretches lie at residues Leu-94–Leu-133 and Ser-162–Ala-215. Ser-318 is subject to Phosphoserine. Tyr-344 is modified (phosphotyrosine; by ABL1). The region spanning Ser-358–Leu-415 is the SH3 domain.

Homodimer. Homotrimer. Interacts (via coiled-coil domain) with CD2AP, PTPN12 and PTPN18. Interacts (via SH3 domain) with ABL1 and WAS. Interacts (via SH3 and coiled-coil domains) with MEFV (via B-box zinc finger); the interaction allows binding of MEFV to PYCARD and facilitates formation of PYCARD pyroptosomes. Interacts with DNM2 and FASLG. Interacts with CD2. Post-translationally, dephosphorylated on Tyr-344 by PTPN18, this event negatively regulates the association of PSTPIP1 with SH2 domain-containing proteins as tyrosine kinase. Phosphorylation of Tyr-344 is probably required for subsequent phosphorylation at other tyrosine residues. Phosphorylation is induced by activation of the EGFR and PDGFR in a ABL1 dependent manner. The phosphorylation regulates the interaction with WAS and with MEFV. Highly expressed in adult lung and spleen, and weakly expressed in testis, muscle, kidney, brain and heart. Highly expressed in spleen and thymus, moderately in lung, brain and muscle, and weakly expressed in heart and liver (at protein level).

Its subcellular location is the cytoplasm. The protein localises to the perinuclear region. It is found in the cell projection. It localises to the lamellipodium. The protein resides in the cleavage furrow. Its subcellular location is the cytoskeleton. The protein localises to the cell membrane. It is found in the uropodium. Functionally, involved in regulation of the actin cytoskeleton. May regulate WAS actin-bundling activity. Bridges the interaction between ABL1 and PTPN18 leading to ABL1 dephosphorylation. May play a role as a scaffold protein between PTPN12 and WAS and allow PTPN12 to dephosphorylate WAS. Has the potential to physically couple CD2 and CD2AP to WAS. Acts downstream of CD2 and CD2AP to recruit WAS to the T-cell:APC contact site so as to promote the actin polymerization required for synapse induction during T-cell activation. Down-regulates CD2-stimulated adhesion through the coupling of PTPN12 to CD2. Also has a role in innate immunity and the inflammatory response. Recruited to inflammasomes by MEFV. Induces formation of pyroptosomes, large supramolecular structures composed of oligomerized PYCARD dimers which form prior to inflammatory apoptosis. Binding to MEFV allows MEFV to bind to PYCARD and facilitates pyroptosome formation. Regulates endocytosis and cell migration in neutrophils. This Mus musculus (Mouse) protein is Proline-serine-threonine phosphatase-interacting protein 1 (Pstpip1).